A 110-amino-acid chain; its full sequence is UPF0060 membrane protein Swit_0423 (110 aa).

A run of 4 helical transmembrane segments spans residues 6-26, 29-49, 61-81, and 90-110; these read LFIF…FWAW, LGKS…FAWL, AFAA…WAVE, and LIGV…PRTA.

The protein belongs to the UPF0060 family.

Its subcellular location is the cell inner membrane. The chain is UPF0060 membrane protein Swit_0423 from Rhizorhabdus wittichii (strain DSM 6014 / CCUG 31198 / JCM 15750 / NBRC 105917 / EY 4224 / RW1) (Sphingomonas wittichii).